Here is a 203-residue protein sequence, read N- to C-terminus: Probable cytochrome c oxidase subunit 3 (203 aa).

5 helical membrane-spanning segments follow: residues 30 to 50 (IIWL…YFVA), 69 to 89 (LAVP…MGVF), 102 to 122 (WYFI…YEYY), 142 to 162 (ITTG…VFLL), and 179 to 199 (IVVS…FATI).

It belongs to the cytochrome c oxidase subunit 3 family.

The protein localises to the cell membrane. The catalysed reaction is 4 Fe(II)-[cytochrome c] + O2 + 8 H(+)(in) = 4 Fe(III)-[cytochrome c] + 2 H2O + 4 H(+)(out). The chain is Probable cytochrome c oxidase subunit 3 (ctaE) from Nocardia farcinica (strain IFM 10152).